Here is a 186-residue protein sequence, read N- to C-terminus: Ribosome-recycling factor (186 aa).

The protein belongs to the RRF family.

Its subcellular location is the cytoplasm. Its function is as follows. Responsible for the release of ribosomes from messenger RNA at the termination of protein biosynthesis. May increase the efficiency of translation by recycling ribosomes from one round of translation to another. The chain is Ribosome-recycling factor from Maricaulis maris (strain MCS10) (Caulobacter maris).